The sequence spans 1940 residues: Myosin-2 (1940 aa).

The region spanning 33-82 (DAKTSVFVAEPKESFVKGTVQSREGGKVTVKTEAGATLTVKEDQVFPMNP) is the Myosin N-terminal SH3-like domain. Phosphothreonine is present on residues threonine 64 and threonine 69. The region spanning 86 to 783 (DKIEDMAMMT…LLGLLEEMRD (698 aa)) is the Myosin motor domain. Position 130 is an N6,N6,N6-trimethyllysine (lysine 130). 179-186 (GESGAGKT) lines the ATP pocket. Tyrosine 389 carries the phosphotyrosine modification. Serine 392 carries the post-translational modification Phosphoserine. Threonine 419 carries the post-translational modification Phosphothreonine. The residue at position 625 (serine 625) is a Phosphoserine. The segment at 660–682 (LNKLMTNLRSTHPHFVRCIIPNE) is actin-binding. The residue at position 758 (histidine 758) is a Pros-methylhistidine. An actin-binding region spans residues 762–776 (KFGHTKVFFKAGLLG). The region spanning 786 to 815 (LAQLITRTQARCRGFLARVEYQKMVERRES) is the IQ domain. Positions 844 to 1940 (LLKSAETEKE…EVHTKVISEE (1097 aa)) form a coiled coil. A phosphoserine mark is found at serine 1093, serine 1097, serine 1163, and serine 1238. The segment at 1154-1173 (RLEEAGGATSAQIEMNKKRE) is disordered. At threonine 1242 the chain carries Phosphothreonine. Serine 1244 is subject to Phosphoserine. Phosphothreonine is present on threonine 1256. Residue serine 1262 is modified to Phosphoserine. At threonine 1287 the chain carries Phosphothreonine. Serine 1289, serine 1293, serine 1304, and serine 1307 each carry phosphoserine. Tyrosine 1465 is modified (phosphotyrosine). Threonine 1468 is subject to Phosphothreonine. Serine 1475 carries the post-translational modification Phosphoserine. Tyrosine 1493 carries the phosphotyrosine modification. Position 1496 is a phosphoserine (serine 1496). At threonine 1502 the chain carries Phosphothreonine. Serine 1515 bears the Phosphoserine mark. At threonine 1518 the chain carries Phosphothreonine. Serine 1543, serine 1555, serine 1575, serine 1601, serine 1715, and serine 1727 each carry phosphoserine. Phosphothreonine occurs at positions 1731 and 1737. Serine 1740 is subject to Phosphoserine. Residues 1884-1920 (KRQAEEAEEQSNTNLSKFRKLQHELEEAEERADIAES) are disordered.

The protein belongs to the TRAFAC class myosin-kinesin ATPase superfamily. Myosin family. Muscle myosin is a hexameric protein that consists of 2 heavy chain subunits (MHC), 2 alkali light chain subunits (MLC) and 2 regulatory light chain subunits (MLC-2). Interacts with GCSAM.

The protein resides in the cytoplasm. Its subcellular location is the myofibril. Myosins are actin-based motor molecules with ATPase activity essential for muscle contraction. In Canis lupus familiaris (Dog), this protein is Myosin-2 (MYH2).